The primary structure comprises 116 residues: U16-barytoxin-Tl1a (116 aa).

Positions 1 to 20 (MKTIIVFLSLLVLATKFGDA) are cleaved as a signal peptide. Positions 21 to 74 (KEGVNQKQKKEVTQNEFREEYLNEMAAMSLVQQLEAIERALFENEAGRNSRQKR) are excised as a propeptide. 3 disulfides stabilise this stretch: C75-C90, C82-C95, and C89-C110.

This sequence belongs to the neurotoxin 14 (magi-1) family. 06 (ICK-Trit) subfamily. In terms of tissue distribution, expressed by the venom gland.

The protein localises to the secreted. Functionally, ion channel inhibitor. This Trittame loki (Brush-footed trapdoor spider) protein is U16-barytoxin-Tl1a.